We begin with the raw amino-acid sequence, 509 residues long: MNNVFDQYEVWFVTGAQLLYGGDAVIAVDAHSNEMVNGLNESGKLPVKVVYKGTANSSKEVEAVFKAANNDDKCVGVITWMHTFSPAKMWIHGLQQLKKPLLHLHTQFNKEIPWDTMDMDFMNLNQSAHGDREFGHICTRMRIRRKVVVGYWKEEETLHKIAVWMRVCAGWADSQDMLIIRFGDQMNNVAVTDGDKVEAEQRMGYHVDYCPASELMEYHKDIKNADVDALVATYFNDYDHDASLEDKSTEAYQKVWNAAKAELALRAILKAKGAKGFTTNFDDLGQTDGSYFDQIPGLASQRLMAEGYGFGAEGDWKSAALYRTVWVMNQGLPKGCSFLEDYTLNFDGANSSILQSHMLEICPLIAANKPRLEVHFLGIGIRKSQTARLVFTSKTGTGCTATVVDMGNRFRLIVNDVECIEPKPLPKLPVASALWIPMPNLEVGAGAWILAGGTHHSCFSYDLTAEYWEDYAEIAGIEMVHINKDTTISCFKKELRMNEVYYMLNKALC.

Mn(2+) is bound by residues Glu-313, Glu-340, His-357, and His-456.

This sequence belongs to the arabinose isomerase family. The cofactor is Mn(2+).

The enzyme catalyses beta-L-arabinopyranose = L-ribulose. The protein operates within carbohydrate degradation; L-arabinose degradation via L-ribulose; D-xylulose 5-phosphate from L-arabinose (bacterial route): step 1/3. Functionally, catalyzes the conversion of L-arabinose to L-ribulose. This chain is L-arabinose isomerase, found in Bacteroides thetaiotaomicron (strain ATCC 29148 / DSM 2079 / JCM 5827 / CCUG 10774 / NCTC 10582 / VPI-5482 / E50).